The sequence spans 231 residues: Large ribosomal subunit protein uL1 (231 aa).

Belongs to the universal ribosomal protein uL1 family. In terms of assembly, part of the 50S ribosomal subunit.

In terms of biological role, binds directly to 23S rRNA. The L1 stalk is quite mobile in the ribosome, and is involved in E site tRNA release. Functionally, protein L1 is also a translational repressor protein, it controls the translation of the L11 operon by binding to its mRNA. This is Large ribosomal subunit protein uL1 from Gluconacetobacter diazotrophicus (strain ATCC 49037 / DSM 5601 / CCUG 37298 / CIP 103539 / LMG 7603 / PAl5).